An 80-amino-acid chain; its full sequence is Crustacean hyperglycemic hormones (80 aa).

3 disulfides stabilise this stretch: Cys-13–Cys-49, Cys-29–Cys-45, and Cys-32–Cys-58. Val-78 carries the post-translational modification Valine amide.

The protein belongs to the arthropod CHH/MIH/GIH/VIH hormone family. As to expression, produced by the medulla terminalis X-organ in the eyestalks and transported to the sinus gland where they are stored and released.

It localises to the secreted. Functionally, hormone found in the sinus gland of isopods and decapods which controls the blood sugar level. Has a secretagogue action over the amylase released from the midgut gland. May act as a stress hormone and may be involved in the control of molting and reproduction. The polypeptide is Crustacean hyperglycemic hormones (Penaeus vannamei (Whiteleg shrimp)).